The following is a 190-amino-acid chain: Somatotropin (190 aa).

Position 19 (His-19) interacts with Zn(2+). Cys-52 and Cys-163 are oxidised to a cystine. Ser-105 is subject to Phosphoserine. Glu-172 lines the Zn(2+) pocket. A disulfide bridge links Cys-180 with Cys-188.

This sequence belongs to the somatotropin/prolactin family.

The protein localises to the secreted. In terms of biological role, plays an important role in growth control. Its major role in stimulating body growth is to stimulate the liver and other tissues to secrete IGF1. It stimulates both the differentiation and proliferation of myoblasts. It also stimulates amino acid uptake and protein synthesis in muscle and other tissues. The protein is Somatotropin (GH1) of Vulpes vulpes (Red fox).